Consider the following 871-residue polypeptide: Espin (871 aa).

ANK repeat units follow at residues 1–31, 35–66, 69–99, 103–132, 137–167, 171–201, 205–235, 239–268, and 271–300; these read MALE…GPSL, LDAL…AVSR, NGAT…RVQE, SGAT…ANSA, TGAL…GVNA, NGAT…DPHL, DGMT…SFSE, DGAT…EISQ, and WGGT…GLDV. Residues Ser-338 and Ser-342 each carry the phosphoserine modification. 4 disordered regions span residues 349 to 400, 416 to 469, 493 to 750, and 819 to 850; these read QLDS…RGIP, PEKS…VGLH, KVEL…APGV, and EREQ…TLGY. Residues 352-365 show a composition bias toward polar residues; that stretch reads SGMSSPNTTMSVQP. Positions 377-395 are enriched in low complexity; the sequence is FSNYDSCSSSHSSSKGQRS. Positions 428-465 are enriched in pro residues; the sequence is PSPPPPPPPPPPSFPPPPPPTGTQPPPPPPGYPAPNPP. 3 positions are modified to phosphoserine: Ser-517, Ser-524, and Ser-556. Residues 522–548 are compositionally biased toward basic and acidic residues; that stretch reads QDSELLHRQELLRHSTGLRRQDSDRKQ. Positions 606 to 629 are enriched in pro residues; it reads LPPPPPPPPLPEALSSPPPAPPLP. Polar residues-rich tracts occupy residues 659–670 and 685–707; these read KSFNMMSPTGDN and PTPQ…SQPE. A Phosphoserine modification is found at Ser-665. In terms of domain architecture, WH2 spans 669–686; it reads DNSELLAEIKAGKSLKPT. 3 positions are modified to phosphoserine: Ser-704, Ser-708, and Ser-714. A coiled-coil region spans residues 772-848; the sequence is KRQVMVRKLQ…KEQSEKLRTL (77 aa).

In terms of assembly, monomer. Binds F-actin in a Ca(2+)-resistant fashion. Interacts (via N-terminus) with BAIAP2 (via SH3-domain). Interacts with PFN2. Interacts with MYO3A (via C-terminus). Interacts with MYO3B (via C-terminus). In terms of tissue distribution, expressed at high concentration in the microvillar parallel actin bundle (PAB) of hair cells stereocilia in the cochlea and vestibular system. Detected also at high levels of a number of other sensory cell types, including taste receptor cells, solitary chemoreceptor cells, vomeronasal sensory neurons and Merkel cells. Isoforms 2, 3, 4 and 5 are expressed in Purkinje cells dendritic spines. Expressed in utricle hair bundles (at protein level).

The protein localises to the cytoplasm. The protein resides in the cytoskeleton. It localises to the cell projection. It is found in the stereocilium. Its subcellular location is the microvillus. The protein localises to the cell junction. The protein resides in the dendritic spine. Multifunctional actin-bundling protein. Plays a major role in regulating the organization, dimension, dynamics and signaling capacities of the actin filament-rich microvilli in the mechanosensory and chemosensory cells. Required for the assembly and stabilization of the stereociliary parallel actin bundles. Plays a crucial role in the formation and maintenance of inner ear hair cell stereocilia. Involved in the elongation of actin in stereocilia. In extrastriolar hair cells, required for targeting MYO3B to stereocilia tips, and for regulation of stereocilia diameter and staircase formation. This is Espin (Espn) from Mus musculus (Mouse).